The chain runs to 348 residues: Erythronate-4-phosphate dehydrogenase (348 aa).

Substrate is bound by residues T46 and T67. NAD(+) is bound at residue D147. R209 is a catalytic residue. D233 is a binding site for NAD(+). Residue E238 is part of the active site. The active-site Proton donor is H255. G258 is a binding site for NAD(+). Y259 provides a ligand contact to substrate.

This sequence belongs to the D-isomer specific 2-hydroxyacid dehydrogenase family. PdxB subfamily. In terms of assembly, homodimer.

Its subcellular location is the cytoplasm. The catalysed reaction is 4-phospho-D-erythronate + NAD(+) = (R)-3-hydroxy-2-oxo-4-phosphooxybutanoate + NADH + H(+). Its pathway is cofactor biosynthesis; pyridoxine 5'-phosphate biosynthesis; pyridoxine 5'-phosphate from D-erythrose 4-phosphate: step 2/5. Catalyzes the oxidation of erythronate-4-phosphate to 3-hydroxy-2-oxo-4-phosphonooxybutanoate. This chain is Erythronate-4-phosphate dehydrogenase, found in Bacteroides thetaiotaomicron (strain ATCC 29148 / DSM 2079 / JCM 5827 / CCUG 10774 / NCTC 10582 / VPI-5482 / E50).